A 203-amino-acid polypeptide reads, in one-letter code: Holliday junction branch migration complex subunit RuvA (203 aa).

Positions 1–64 (MIGRLRGIIL…EDAQLLYGFN (64 aa)) are domain I. Positions 65–142 (NKQERMLFRE…KGLHGDLFTP (78 aa)) are domain II. Residues 143-154 (AADLVLTSPNGP) form a flexible linker region. Positions 155–203 (TSDDAEQEAVAALVALGYKPQEASRMVSKIAKPDANSETLIREALRAAL) are domain III.

This sequence belongs to the RuvA family. Homotetramer. Forms an RuvA(8)-RuvB(12)-Holliday junction (HJ) complex. HJ DNA is sandwiched between 2 RuvA tetramers; dsDNA enters through RuvA and exits via RuvB. An RuvB hexamer assembles on each DNA strand where it exits the tetramer. Each RuvB hexamer is contacted by two RuvA subunits (via domain III) on 2 adjacent RuvB subunits; this complex drives branch migration. In the full resolvosome a probable DNA-RuvA(4)-RuvB(12)-RuvC(2) complex forms which resolves the HJ.

It is found in the cytoplasm. Functionally, the RuvA-RuvB-RuvC complex processes Holliday junction (HJ) DNA during genetic recombination and DNA repair, while the RuvA-RuvB complex plays an important role in the rescue of blocked DNA replication forks via replication fork reversal (RFR). RuvA specifically binds to HJ cruciform DNA, conferring on it an open structure. The RuvB hexamer acts as an ATP-dependent pump, pulling dsDNA into and through the RuvAB complex. HJ branch migration allows RuvC to scan DNA until it finds its consensus sequence, where it cleaves and resolves the cruciform DNA. This is Holliday junction branch migration complex subunit RuvA from Enterobacter sp. (strain 638).